Reading from the N-terminus, the 802-residue chain is Aldehyde dehydrogenase family 16 member A1 (802 aa).

A disordered region spans residues 513–554 (SLPSGPETGPSPAPPYGLFVRGRFQSPGTQSSRPIKDSSGKV).

This sequence belongs to the aldehyde dehydrogenase family. In terms of assembly, interacts with SPG21.

The polypeptide is Aldehyde dehydrogenase family 16 member A1 (Aldh16a1) (Rattus norvegicus (Rat)).